The chain runs to 365 residues: Protein AC54 (365 aa).

As to quaternary structure, interacts with C42 and VP80. Interacts with protein 38K.

It is found in the virion. In terms of biological role, structural protein that participates in nucleocapsid assembly. Plays an essential role in the proper localization of the major capsid protein VP39, and the minor capsid protein 38K into the capsid assembly site. The protein is Protein AC54 (AC54) of Lepidoptera (butterflies and moths).